We begin with the raw amino-acid sequence, 491 residues long: Serine/threonine-protein kinase 3/4 (491 aa).

The interval 1–24 (MEEVQRRQHPHPRRSLKKLSEDSL) is disordered. Positions 7-17 (RQHPHPRRSLK) are enriched in basic residues. The Protein kinase domain maps to 32 to 283 (FDVLEKLGEG…ATQLLQHPFI (252 aa)). ATP is bound by residues 38 to 46 (LGEGSYGSV) and Lys61. The active-site Proton acceptor is the Asp151. At Thr185 the chain carries Phosphothreonine; by autocatalysis. Residues 292 to 334 (LRDLITDMMEIKLKRQEEQQRDLDQDDEENSEEDDMDSGTMVR) adopt a coiled-coil conformation. Disordered stretches follow at residues 307–394 (QEEQ…IQQS) and 406–435 (EKEN…PQDG). The span at 315 to 328 (DQDDEENSEEDDMD) shows a compositional bias: acidic residues. Polar residues-rich tracts occupy residues 363–373 (TLDSQMGTMVI) and 410–428 (QANS…SSDN). The 48-residue stretch at 437 to 484 (FESLKSWSVEELQRRLASLDPTMEQEIEEIRQRYQAKRQPILDAIDAK) folds into the SARAH domain. Positions 442 to 475 (SWSVEELQRRLASLDPTMEQEIEEIRQRYQAKRQ) form a coiled coil.

It belongs to the protein kinase superfamily. STE Ser/Thr protein kinase family. STE20 subfamily. As to quaternary structure, homodimer; mediated via the coiled-coil region. The cofactor is Mg(2+). In terms of processing, proteolytically cleaved by caspase-3 during apoptosis at Asp-328 resulting in a 37 kDa form. Proteolytic cleavage results in kinase activation and nuclear translocation of the truncated form (MST1/N).

The protein localises to the cytoplasm. It is found in the nucleus. The enzyme catalyses L-seryl-[protein] + ATP = O-phospho-L-seryl-[protein] + ADP + H(+). The catalysed reaction is L-threonyl-[protein] + ATP = O-phospho-L-threonyl-[protein] + ADP + H(+). Its activity is regulated as follows. Inhibited by the C-terminal non-catalytic region. Activated by caspase-cleavage. Full activation also requires homodimerization and autophosphorylation of Thr-185. Functionally, stress-activated, pro-apoptotic kinase which, following caspase-cleavage, enters the nucleus and induces chromatin condensation followed by internucleosomal DNA fragmentation. Key component of the Hippo signaling pathway which plays a pivotal role in organ size control and tumor suppression by restricting proliferation and promoting apoptosis. The core of this pathway is composed of a kinase cascade wherein stk3/mst2 and stk4/mst1, in complex with its regulatory protein sav1, phosphorylates and activates lats1/2 in complex with its regulatory protein mob1, which in turn phosphorylates and inactivates yap1 oncoprotein and wwtr1/taz. Phosphorylation of yap1 by lats2 inhibits its translocation into the nucleus to regulate cellular genes important for cell proliferation, cell death, and cell migration. Phosphorylates 'Ser-14' of histone H2B (H2BS14ph) during apoptosis. The sequence is that of Serine/threonine-protein kinase 3/4 (STK4) from Squalus acanthias (Spiny dogfish).